The chain runs to 363 residues: UDP-N-acetylglucosamine--N-acetylmuramyl-(pentapeptide) pyrophosphoryl-undecaprenol N-acetylglucosamine transferase (363 aa).

UDP-N-acetyl-alpha-D-glucosamine-binding positions include 12–14 (TAG), Ser-196, and Gln-291.

The protein belongs to the glycosyltransferase 28 family. MurG subfamily.

It localises to the cell inner membrane. It carries out the reaction di-trans,octa-cis-undecaprenyl diphospho-N-acetyl-alpha-D-muramoyl-L-alanyl-D-glutamyl-meso-2,6-diaminopimeloyl-D-alanyl-D-alanine + UDP-N-acetyl-alpha-D-glucosamine = di-trans,octa-cis-undecaprenyl diphospho-[N-acetyl-alpha-D-glucosaminyl-(1-&gt;4)]-N-acetyl-alpha-D-muramoyl-L-alanyl-D-glutamyl-meso-2,6-diaminopimeloyl-D-alanyl-D-alanine + UDP + H(+). The protein operates within cell wall biogenesis; peptidoglycan biosynthesis. Functionally, cell wall formation. Catalyzes the transfer of a GlcNAc subunit on undecaprenyl-pyrophosphoryl-MurNAc-pentapeptide (lipid intermediate I) to form undecaprenyl-pyrophosphoryl-MurNAc-(pentapeptide)GlcNAc (lipid intermediate II). The protein is UDP-N-acetylglucosamine--N-acetylmuramyl-(pentapeptide) pyrophosphoryl-undecaprenol N-acetylglucosamine transferase of Legionella pneumophila (strain Corby).